Consider the following 538-residue polypeptide: Diacylglycerol O-acyltransferase 1-1 (538 aa).

Disordered regions lie at residues 1–39 (MVGS…GAIV) and 54–106 (AAAA…GGGR). Low complexity predominate over residues 69–83 (EAASGEPSSSSSSSP). 7 consecutive transmembrane segments (helical) span residues 136–156 (AIFK…LVAV), 186–206 (WPLL…FAVE), 218–238 (VATC…VLVI), 245–265 (VLSG…LVSF), 293–313 (NLQP…TLCY), 326–346 (GWLI…GFII), and 382–402 (LWLC…AEIL). An FYXDWWN motif motif is present at residues 409-415 (FYKDWWN). Transmembrane regions (helical) follow at residues 451–471 (VAVL…VAVP), 474–494 (ILKF…VLTA), and 505–525 (VGNM…CLLL). Residue histidine 464 is part of the active site.

Belongs to the membrane-bound acyltransferase family. Sterol o-acyltransferase subfamily.

The protein resides in the endoplasmic reticulum membrane. It carries out the reaction an acyl-CoA + a 1,2-diacyl-sn-glycerol = a triacyl-sn-glycerol + CoA. It functions in the pathway glycerolipid metabolism; triacylglycerol biosynthesis. Involved in triacylglycerol (TAG) synthesis. Catalyzes the acylation of the sn-3 hydroxy group of sn-1,2-diacylglycerol using acyl-CoA. The polypeptide is Diacylglycerol O-acyltransferase 1-1 (Oryza sativa subsp. japonica (Rice)).